Consider the following 720-residue polypeptide: TAL effector protein Rip19 (720 aa).

Disordered stretches follow at residues 13–85 (SVSL…PSLV) and 175–205 (QAFA…PTFL). Over residues 67 to 85 (PRRPLPVAPASAPPAPSLV) the composition is skewed to pro residues. The Nuclear localization signal 1 signature appears at 185 to 191 (RSARARR). The stretch at 286–320 (LTRAHIVDIARQRSGDLALQALLPVATALTAAPLR) is one Cryptic repeat -1 repeat. Residues 321–354 (LSASQIATVAQYGERPAIQALYRLRRKLTRAPLH) form a Cryptic repeat 0 repeat. A Core repeat 1 repeat occupies 355–389 (LTPQQVVAIASHDGGKPALEAVWAKLPVLRGVPYA). The Cryptic repeat +1 repeat unit spans residues 390–423 (LSTAQVVAIACISGQQALEAIEAHMPTLRQAPHS). The stretch at 424–457 (LSPERVAAIACIGGRSAVEAVRQGLPVKAIRRIR) is one Cryptic repeat +2 repeat. Short sequence motifs (nuclear localization signal) lie at residues 455 to 458 (RIRR), 583 to 586 (HRKR), and 620 to 623 (RRKR). A disordered region spans residues 571 to 611 (SPGMAGQSACSPHRKRPAETAIAPRSIRRRPNNAGQPSEPW).

It belongs to the transcription activator-like effector (TALE) family. RipTAL/RTL subfamily.

It is found in the secreted. It localises to the host nucleus. Functionally, does not activate plant gene transcription, because it has too few core repeats. The sequence is that of TAL effector protein Rip19 from Ralstonia solanacearum (Pseudomonas solanacearum).